The chain runs to 210 residues: Uridine kinase (210 aa).

Glycine 12–threonine 19 provides a ligand contact to ATP.

This sequence belongs to the uridine kinase family.

Its subcellular location is the cytoplasm. The enzyme catalyses uridine + ATP = UMP + ADP + H(+). It catalyses the reaction cytidine + ATP = CMP + ADP + H(+). The protein operates within pyrimidine metabolism; CTP biosynthesis via salvage pathway; CTP from cytidine: step 1/3. It participates in pyrimidine metabolism; UMP biosynthesis via salvage pathway; UMP from uridine: step 1/1. The protein is Uridine kinase of Bacillus pumilus (strain SAFR-032).